A 573-amino-acid polypeptide reads, in one-letter code: Estrogen receptor beta (573 aa).

The segment at 15–170 (QEVDSSKVGE…CFAGKGDMHF (156 aa)) is modulating. 2 NR C4-type zinc fingers span residues 171 to 191 (CAVCHDYASGYHYGVWSCEGC) and 207 to 231 (CPATNQCTIDKNRRKSCQACRLRKC). A DNA-binding region (nuclear receptor) is located at residues 171 to 236 (CAVCHDYASG…RLRKCYEVGM (66 aa)). Residues 291 to 527 (TPEQLINRII…DLLLEMLDAN (237 aa)) enclose the NR LBD domain. 2 stretches are compositionally biased toward low complexity: residues 534–552 (MSASYSSQPSPWSQAAQSQ) and 559–573 (CSGECPCPPKESSTI). The disordered stretch occupies residues 534-573 (MSASYSSQPSPWSQAAQSQPGPPPSCSGECPCPPKESSTI).

It belongs to the nuclear hormone receptor family. NR3 subfamily. As to quaternary structure, binds DNA as a homodimer. Can form a heterodimer with ER-alpha. As to expression, liver.

The protein localises to the nucleus. In terms of biological role, binds estrogens with an affinity similar to that of ER-alpha, and activates expression of reporter genes containing estrogen response elements (ERE) in an estrogen-dependent manner. This chain is Estrogen receptor beta (esr2), found in Anguilla japonica (Japanese eel).